Here is a 424-residue protein sequence, read N- to C-terminus: Enolase (424 aa).

Gln-162 serves as a coordination point for (2R)-2-phosphoglycerate. Glu-204 (proton donor) is an active-site residue. Residues Asp-241, Glu-284, and Asp-311 each contribute to the Mg(2+) site. Residues Lys-336, Arg-365, Ser-366, and Lys-387 each contribute to the (2R)-2-phosphoglycerate site. Catalysis depends on Lys-336, which acts as the Proton acceptor.

It belongs to the enolase family. The cofactor is Mg(2+).

The protein resides in the cytoplasm. It is found in the secreted. It localises to the cell surface. The catalysed reaction is (2R)-2-phosphoglycerate = phosphoenolpyruvate + H2O. It functions in the pathway carbohydrate degradation; glycolysis; pyruvate from D-glyceraldehyde 3-phosphate: step 4/5. Functionally, catalyzes the reversible conversion of 2-phosphoglycerate (2-PG) into phosphoenolpyruvate (PEP). It is essential for the degradation of carbohydrates via glycolysis. This chain is Enolase, found in Rhizobium meliloti (strain 1021) (Ensifer meliloti).